Consider the following 343-residue polypeptide: Nuclear distribution protein nudE-like 1 (343 aa).

A coiled-coil region spans residues 25–190 (KYKQSFQEAR…LAVRERQQEV (166 aa)). 2 disordered regions span residues 184 to 204 (RERQ…LDCE) and 322 to 343 (QGTP…PLSV).

The protein belongs to the nudE family. Post-translationally, phosphorylated in mitosis.

It localises to the cytoplasm. The protein localises to the cytoskeleton. Its subcellular location is the microtubule organizing center. It is found in the centrosome. The protein resides in the spindle. In terms of biological role, required for organization of the cellular microtubule array and microtubule anchoring at the centrosome. Positively regulates the activity of the minus-end directed microtubule motor protein dynein. May enhance dynein-mediated microtubule sliding by targeting dynein to the microtubule plus end. Positively regulates lysosome peripheral distribution and ruffled border formation in osteoclasts. This is Nuclear distribution protein nudE-like 1 (NDEL1) from Gallus gallus (Chicken).